The sequence spans 252 residues: Triosephosphate isomerase (252 aa).

N9–K11 provides a ligand contact to substrate. H96 acts as the Electrophile in catalysis. The active-site Proton acceptor is E166. Substrate-binding positions include G172, S212, and G233 to G234.

Belongs to the triosephosphate isomerase family. In terms of assembly, homodimer.

It is found in the cytoplasm. It catalyses the reaction D-glyceraldehyde 3-phosphate = dihydroxyacetone phosphate. The protein operates within carbohydrate biosynthesis; gluconeogenesis. It participates in carbohydrate degradation; glycolysis; D-glyceraldehyde 3-phosphate from glycerone phosphate: step 1/1. Involved in the gluconeogenesis. Catalyzes stereospecifically the conversion of dihydroxyacetone phosphate (DHAP) to D-glyceraldehyde-3-phosphate (G3P). The chain is Triosephosphate isomerase from Chlorobium chlorochromatii (strain CaD3).